The sequence spans 591 residues: V-type ATP synthase alpha chain (591 aa).

Position 233 to 240 (233 to 240) interacts with ATP; it reads GPFGAGKT.

The protein belongs to the ATPase alpha/beta chains family.

It catalyses the reaction ATP + H2O + 4 H(+)(in) = ADP + phosphate + 5 H(+)(out). Functionally, produces ATP from ADP in the presence of a proton gradient across the membrane. The V-type alpha chain is a catalytic subunit. This Streptococcus pneumoniae serotype 19F (strain G54) protein is V-type ATP synthase alpha chain.